The primary structure comprises 727 residues: Probable acyl-activating enzyme 18, peroxisomal (727 aa).

The short motif at 725–727 (SRI) is the Microbody targeting signal element.

Belongs to the ATP-dependent AMP-binding enzyme family. In terms of tissue distribution, expressed in flowers.

The protein resides in the peroxisome. Its function is as follows. May be involved in the peroxisomal activation of 2,4-dichlorophenoxybutyric acid (2,4-DB), a precursor of active auxins that inhibit root growth. This chain is Probable acyl-activating enzyme 18, peroxisomal (AAE18), found in Arabidopsis thaliana (Mouse-ear cress).